Consider the following 62-residue polypeptide: MDARLLEILVCPLCKGPLDYLKDKQELVCKADRLAFPIRDGIPVMLEEEARALAAEDVDALR.

This sequence belongs to the UPF0434 family.

This chain is UPF0434 protein azo1471, found in Azoarcus sp. (strain BH72).